Here is a 101-residue protein sequence, read N- to C-terminus: Transcription factor ILI2 (101 aa).

Residues 1 to 22 form a disordered region; the sequence is MSSSRRSRTSSRLAAAPPPTDE. Residues 8 to 63 enclose the bHLH domain; that stretch reads RTSSRLAAAPPPTDEQMAELISKLQAVLPTRGGEANAKQASSAEVLQEACRYIRRL.

The protein belongs to the bHLH protein family.

Functionally, atypical and probable non DNA-binding bHLH transcription factor that integrates multiple signaling pathways to regulate cell elongation and plant development. This Oryza sativa subsp. indica (Rice) protein is Transcription factor ILI2 (ILI2).